A 788-amino-acid chain; its full sequence is Integrin beta-6 (788 aa).

Residues 1-21 (MGIELLCLFFLFLGRNDHVQG) form the signal peptide. The PSI domain maps to 22 to 71 (GCALGGAETCEDCLLIGPQCAWCAQENFTHPSGVGERCDTPANLLAKGCQ). Topologically, residues 22 to 709 (GCALGGAETC…KDCPKPPNIP (688 aa)) are extracellular. 19 disulfide bridges follow: C23–C41, C31–C454, C34–C59, C44–C70, C197–C204, C252–C293, C394–C406, C426–C452, C456–C476, C467–C479, C481–C490, C492–C519, C502–C517, C511–C522, C524–C537, C539–C560, C544–C558, C552–C563, and C565–C574. N48 and N97 each carry an N-linked (GlcNAc...) asparagine glycan. The region spanning 131-371 (YPVDLYYLMD…QLIISAYEEL (241 aa)) is the VWFA domain. Positions 140, 142, and 144 each coordinate Mg(2+). 4 residues coordinate Ca(2+): S144, D147, D148, and E179. Positions 235, 237, 239, and 240 each coordinate Ca(2+). A Mg(2+)-binding site is contributed by E240. N260 is a glycosylation site (N-linked (GlcNAc...) asparagine). D271 and K355 together coordinate Ca(2+). N387 and N396 each carry an N-linked (GlcNAc...) asparagine glycan. I-EGF domains follow at residues 456 to 491 (CQKE…PRCE), 492 to 538 (CGED…PYCQ), 539 to 575 (CDNF…EYCN), and 576 to 615 (CTTS…PTCE). N463 and N471 each carry an N-linked (GlcNAc...) asparagine glycan. N541 carries N-linked (GlcNAc...) asparagine glycosylation. Residue N575 is glycosylated (N-linked (GlcNAc...) asparagine). Cystine bridges form between C576–C599, C583–C597, C591–C602, C604–C614, C617–C620, C624–C670, C630–C649, C633–C645, and C678–C702. A helical transmembrane segment spans residues 710 to 730 (MIMLGVSLAILLIGVVLLCIW). The interval 731-758 (KLLVSFHDRKEVAKFEAERSKAKWQTGT) is interaction with HAX1. Over 731–788 (KLLVSFHDRKEVAKFEAERSKAKWQTGTNPLYRGSTSTFKNVTYKHREKQKVDLSTDC) the chain is Cytoplasmic.

It belongs to the integrin beta chain family. In terms of assembly, heterodimer of an alpha and a beta subunit. Interacts with FLNB. Interacts with HAX1. ITGAV:ITGB6 interacts with FBN1. ITGAV:ITGB6 interacts with TGFB1. As to quaternary structure, (Microbial infection) Integrin ITGAV:ITGB6 interacts with coxsackievirus A9, coxsackievirus B1 capsid proteins. (Microbial infection) Integrin ITGAV:ITGB6 interacts with herpes simplex virus-1/HHV-1 gH:gL proteins.

It is found in the cell membrane. Its subcellular location is the cell junction. The protein resides in the focal adhesion. In terms of biological role, integrin alpha-V:beta-6 (ITGAV:ITGB6) is a receptor for fibronectin and cytotactin. It recognizes the sequence R-G-D in its ligands. Internalization of integrin alpha-V/beta-6 via clathrin-mediated endocytosis promotes carcinoma cell invasion. ITGAV:ITGB6 acts as a receptor for fibrillin-1 (FBN1) and mediates R-G-D-dependent cell adhesion to FBN1. Integrin alpha-V:beta-6 (ITGAV:ITGB6) mediates R-G-D-dependent release of transforming growth factor beta-1 (TGF-beta-1) from regulatory Latency-associated peptide (LAP), thereby playing a key role in TGF-beta-1 activation. Its function is as follows. (Microbial infection) Integrin ITGAV:ITGB6 acts as a receptor for Coxsackievirus A9 and Coxsackievirus B1. (Microbial infection) Integrin ITGAV:ITGB6 acts as a receptor for Herpes simplex virus-1/HHV-1. The protein is Integrin beta-6 (ITGB6) of Homo sapiens (Human).